A 752-amino-acid chain; its full sequence is Primary amine oxidase (752 aa).

Positions 1 to 27 (MAILSPRKTALALAVALSCAWQSPAFA) are cleaved as a signal peptide. Substrate-binding positions include 408–419 (YLDSGDYGMGTL) and 490–495 (VGNYDY). Asp-410 (proton acceptor) is an active-site residue. Catalysis depends on Tyr-493, which acts as the Schiff-base intermediate with substrate; via topaquinone. A 2',4',5'-topaquinone modification is found at Tyr-493. Cu cation-binding residues include His-551 and His-553. 8 residues coordinate Ca(2+): Asp-560, Leu-561, Asp-562, Glu-600, Tyr-694, Asp-697, Glu-699, and Asp-705. Asp-560 serves as a coordination point for Mn(2+). Asp-562 contacts Mn(2+). Residue Asp-705 coordinates Mn(2+). His-716 lines the Cu cation pocket.

It belongs to the copper/topaquinone oxidase family. Homodimer. Cu cation serves as cofactor. The cofactor is Ca(2+). Requires L-topaquinone as cofactor. Mn(2+) is required as a cofactor. Post-translationally, topaquinone (TPQ) is generated by copper-dependent autoxidation of a specific tyrosyl residue.

It localises to the periplasm. The enzyme catalyses a primary methyl amine + O2 + H2O = an aldehyde + H2O2 + NH4(+). Functionally, active on tyramine, tryptamine, beta-phenethylamine and dopamine. The polypeptide is Primary amine oxidase (maoA) (Klebsiella michiganensis (strain ATCC 8724 / DSM 4798 / JCM 20051 / NBRC 3318 / NRRL B-199 / KCTC 1686 / BUCSAV 143 / CCM 1901)).